A 638-amino-acid chain; its full sequence is 1-deoxy-D-xylulose-5-phosphate synthase (638 aa).

Residues histidine 75 and 116-118 (AHS) contribute to the thiamine diphosphate site. Aspartate 147 is a binding site for Mg(2+). Residues 148-149 (GA), asparagine 177, tyrosine 288, and glutamate 370 each bind thiamine diphosphate. Asparagine 177 lines the Mg(2+) pocket.

This sequence belongs to the transketolase family. DXPS subfamily. In terms of assembly, homodimer. Mg(2+) serves as cofactor. Requires thiamine diphosphate as cofactor.

It catalyses the reaction D-glyceraldehyde 3-phosphate + pyruvate + H(+) = 1-deoxy-D-xylulose 5-phosphate + CO2. Its pathway is metabolic intermediate biosynthesis; 1-deoxy-D-xylulose 5-phosphate biosynthesis; 1-deoxy-D-xylulose 5-phosphate from D-glyceraldehyde 3-phosphate and pyruvate: step 1/1. In terms of biological role, catalyzes the acyloin condensation reaction between C atoms 2 and 3 of pyruvate and glyceraldehyde 3-phosphate to yield 1-deoxy-D-xylulose-5-phosphate (DXP). In Cupriavidus pinatubonensis (strain JMP 134 / LMG 1197) (Cupriavidus necator (strain JMP 134)), this protein is 1-deoxy-D-xylulose-5-phosphate synthase.